The following is an 843-amino-acid chain: Protein P (843 aa).

Residues 1 to 177 (MPLSYQHFRK…FCGSPYSWEQ (177 aa)) are terminal protein domain (TP). Positions 178–346 (ELQHGRLVFQ…YCLSHIVNLL (169 aa)) are spacer. Disordered stretches follow at residues 218-243 (LKQSRLGLQPQQGSLARGKSGRSGSI) and 290-316 (STSKRQSSSGHAVELHNIPPSSARSQS). Residues 290 to 299 (STSKRQSSSG) show a composition bias toward polar residues. A polymerase/reverse transcriptase domain (RT) region spans residues 347–690 (EDWGPCTEHG…YLHLYPVARQ (344 aa)). Positions 357-600 (EHNIRIPRTP…YSLNFMGYVI (244 aa)) constitute a Reverse transcriptase domain. Residues aspartate 429, aspartate 551, and aspartate 552 each contribute to the Mg(2+) site.

The protein belongs to the hepadnaviridae P protein family.

It carries out the reaction DNA(n) + a 2'-deoxyribonucleoside 5'-triphosphate = DNA(n+1) + diphosphate. The enzyme catalyses Endonucleolytic cleavage to 5'-phosphomonoester.. Activated by host HSP70 and HSP40 in vitro to be able to bind the epsilon loop of the pgRNA. Because deletion of the RNase H region renders the protein partly chaperone-independent, the chaperones may be needed indirectly to relieve occlusion of the RNA-binding site by this domain. Inhibited by several reverse-transcriptase inhibitors: Lamivudine, Adefovir and Entecavir. In terms of biological role, multifunctional enzyme that converts the viral RNA genome into dsDNA in viral cytoplasmic capsids. This enzyme displays a DNA polymerase activity that can copy either DNA or RNA templates, and a ribonuclease H (RNase H) activity that cleaves the RNA strand of RNA-DNA heteroduplexes in a partially processive 3'- to 5'-endonucleasic mode. Neo-synthesized pregenomic RNA (pgRNA) are encapsidated together with the P protein, and reverse-transcribed inside the nucleocapsid. Initiation of reverse-transcription occurs first by binding the epsilon loop on the pgRNA genome, and is initiated by protein priming, thereby the 5'-end of (-)DNA is covalently linked to P protein. Partial (+)DNA is synthesized from the (-)DNA template and generates the relaxed circular DNA (RC-DNA) genome. After budding and infection, the RC-DNA migrates in the nucleus, and is converted into a plasmid-like covalently closed circular DNA (cccDNA). The activity of P protein does not seem to be necessary for cccDNA generation, and is presumably released from (+)DNA by host nuclear DNA repair machinery. This is Protein P from Homo sapiens (Human).